Here is a 346-residue protein sequence, read N- to C-terminus: N-acetyl-gamma-glutamyl-phosphate reductase (346 aa).

C150 is an active-site residue.

The protein belongs to the NAGSA dehydrogenase family. Type 1 subfamily.

It is found in the cytoplasm. The enzyme catalyses N-acetyl-L-glutamate 5-semialdehyde + phosphate + NADP(+) = N-acetyl-L-glutamyl 5-phosphate + NADPH + H(+). Its pathway is amino-acid biosynthesis; L-arginine biosynthesis; N(2)-acetyl-L-ornithine from L-glutamate: step 3/4. Catalyzes the NADPH-dependent reduction of N-acetyl-5-glutamyl phosphate to yield N-acetyl-L-glutamate 5-semialdehyde. This Desulforamulus reducens (strain ATCC BAA-1160 / DSM 100696 / MI-1) (Desulfotomaculum reducens) protein is N-acetyl-gamma-glutamyl-phosphate reductase.